The primary structure comprises 260 residues: MIRVTVAGAAGRMGREVCRAALEDPEVVLAGGVVEPGSPEVGADLGELCGAGRAGVAASEEPPPEAGVLVEFTTPEATVEHLSYGLPAVIGTTGLSEEQRAKVEEAARGVPIVLAPNMSVGVNLLLGVVRRLSEALGPGYDIEIVEAHHRGKRDAPSGTALLMGRAAASGRGRRLEEVAVYGREGVSPRGEGEIGIHALRGGAVVGEHRVIFYGLGEEVEVVHRALSRRTFAEGALRAARFAAAAQPGLYSMQDVLSSSP.

Residues 8–13 (GAAGRM), Glu35, 91–93 (GTT), and 115–118 (APNM) contribute to the NAD(+) site. His148 serves as the catalytic Proton donor/acceptor. A (S)-2,3,4,5-tetrahydrodipicolinate-binding site is contributed by His149. Lys152 serves as the catalytic Proton donor. 158–159 (GT) provides a ligand contact to (S)-2,3,4,5-tetrahydrodipicolinate.

This sequence belongs to the DapB family.

Its subcellular location is the cytoplasm. The enzyme catalyses (S)-2,3,4,5-tetrahydrodipicolinate + NAD(+) + H2O = (2S,4S)-4-hydroxy-2,3,4,5-tetrahydrodipicolinate + NADH + H(+). It catalyses the reaction (S)-2,3,4,5-tetrahydrodipicolinate + NADP(+) + H2O = (2S,4S)-4-hydroxy-2,3,4,5-tetrahydrodipicolinate + NADPH + H(+). Its pathway is amino-acid biosynthesis; L-lysine biosynthesis via DAP pathway; (S)-tetrahydrodipicolinate from L-aspartate: step 4/4. In terms of biological role, catalyzes the conversion of 4-hydroxy-tetrahydrodipicolinate (HTPA) to tetrahydrodipicolinate. The chain is 4-hydroxy-tetrahydrodipicolinate reductase from Rubrobacter xylanophilus (strain DSM 9941 / JCM 11954 / NBRC 16129 / PRD-1).